The following is a 417-amino-acid chain: Actin-related protein 10 (417 aa).

Belongs to the actin family. In terms of assembly, subunit of dynactin, a multiprotein complex part of a tripartite complex with dynein and a adapter, such as BICDL1, BICD2 or HOOK3. The dynactin complex is built around ACTR1A/ACTB filament and consists of an actin-related filament composed of a shoulder domain, a pointed end and a barbed end. Its length is defined by its flexible shoulder domain. The soulder is composed of 2 DCTN1 subunits, 4 DCTN2 and 2 DCTN3. The 4 DCNT2 (via N-terminus) bind the ACTR1A filament and act as molecular rulers to determine the length. The pointed end is important for binding dynein-dynactin cargo adapters. Consists of 4 subunits: ACTR10, DCNT4, DCTN5 and DCTN6. The barbed end is composed of a CAPZA1:CAPZB heterodimers, which binds ACTR1A/ACTB filament and dynactin and stabilizes dynactin.

It is found in the cytoplasm. The protein resides in the cytoskeleton. Its function is as follows. Part of the dynactin complex that activates the molecular motor dynein for ultra-processive transport along microtubules. In Sus scrofa (Pig), this protein is Actin-related protein 10 (ACTR10).